Here is a 202-residue protein sequence, read N- to C-terminus: Recombination protein RecR (202 aa).

The C4-type zinc-finger motif lies at 56–71 (CVVCGTVSDGELCRIC). Residues 79–179 (TMICVVEEPK…TVTRLASGLP (101 aa)) form the Toprim domain.

This sequence belongs to the RecR family.

Its function is as follows. May play a role in DNA repair. It seems to be involved in an RecBC-independent recombinational process of DNA repair. It may act with RecF and RecO. This chain is Recombination protein RecR, found in Nocardia farcinica (strain IFM 10152).